Consider the following 237-residue polypeptide: uncharacterized protein (237 aa).

21 to 28 (GCDGSGKS) is a binding site for ATP.

It to E.coli YghR and YghT.

This is an uncharacterized protein from Escherichia coli (strain K12).